The primary structure comprises 390 residues: Elongation factor Tu 2 (390 aa).

The tr-type G domain maps to 10 to 201 (KPHVNVGTIG…LDEYVAVPPR (192 aa)). Residues 19 to 26 (GHVDHGKT) form a G1 region. 19 to 26 (GHVDHGKT) contributes to the GTP binding site. Position 26 (Thr26) interacts with Mg(2+). Positions 55–59 (GITIA) are G2. The G3 stretch occupies residues 76–79 (DCPG). GTP is bound by residues 76–80 (DCPGH) and 131–134 (NKAD). The G4 stretch occupies residues 131–134 (NKAD). The tract at residues 168–170 (SAL) is G5.

Belongs to the TRAFAC class translation factor GTPase superfamily. Classic translation factor GTPase family. EF-Tu/EF-1A subfamily. As to quaternary structure, monomer.

It is found in the cytoplasm. It catalyses the reaction GTP + H2O = GDP + phosphate + H(+). Functionally, GTP hydrolase that promotes the GTP-dependent binding of aminoacyl-tRNA to the A-site of ribosomes during protein biosynthesis. This Wolbachia pipientis wMel protein is Elongation factor Tu 2.